The following is a 158-amino-acid chain: Transcription elongation factor GreA (158 aa).

A coiled-coil region spans residues 4–75 (EKTYPMTQEG…TQLENMIRNA (72 aa)).

The protein belongs to the GreA/GreB family.

Its function is as follows. Necessary for efficient RNA polymerase transcription elongation past template-encoded arresting sites. The arresting sites in DNA have the property of trapping a certain fraction of elongating RNA polymerases that pass through, resulting in locked ternary complexes. Cleavage of the nascent transcript by cleavage factors such as GreA or GreB allows the resumption of elongation from the new 3'terminus. GreA releases sequences of 2 to 3 nucleotides. This is Transcription elongation factor GreA from Bacillus cereus (strain ATCC 10987 / NRS 248).